A 515-amino-acid polypeptide reads, in one-letter code: Maturase K (515 aa).

Belongs to the intron maturase 2 family. MatK subfamily.

It is found in the plastid. It localises to the chloroplast. Usually encoded in the trnK tRNA gene intron. Probably assists in splicing its own and other chloroplast group II introns. In Picea pungens (Colorado spruce), this protein is Maturase K.